The sequence spans 286 residues: Ribosome-inactivating protein momordin I (286 aa).

A signal peptide spans 1 to 23 (MSRFSVLSFLILAIFLGGSIVKG). E183 is an active-site residue. The N-linked (GlcNAc...) asparagine glycan is linked to N250. Residues 270–286 (AEGDNGDVSTTHGFSSY) constitute a propeptide, removed in mature form.

The protein belongs to the ribosome-inactivating protein family. Type 1 RIP subfamily.

The enzyme catalyses Endohydrolysis of the N-glycosidic bond at one specific adenosine on the 28S rRNA.. This chain is Ribosome-inactivating protein momordin I, found in Momordica charantia (Bitter gourd).